The chain runs to 697 residues: Polyribonucleotide nucleotidyltransferase (697 aa).

D488 and D494 together coordinate Mg(2+). Residues 555–614 (PTFEVITINPDKIRDVIGKGGATIRQITEETKAAIDIEDNGTVRVFGETKAAARAAIAKI) enclose the KH domain. The 69-residue stretch at 624-692 (GKIYDGKVIR…NRGRIKLSMK (69 aa)) folds into the S1 motif domain.

This sequence belongs to the polyribonucleotide nucleotidyltransferase family. As to quaternary structure, component of the RNA degradosome, which is a multiprotein complex involved in RNA processing and mRNA degradation. The cofactor is Mg(2+).

The protein localises to the cytoplasm. It catalyses the reaction RNA(n+1) + phosphate = RNA(n) + a ribonucleoside 5'-diphosphate. In terms of biological role, involved in mRNA degradation. Catalyzes the phosphorolysis of single-stranded polyribonucleotides processively in the 3'- to 5'-direction. This Acinetobacter baylyi (strain ATCC 33305 / BD413 / ADP1) protein is Polyribonucleotide nucleotidyltransferase.